A 245-amino-acid chain; its full sequence is Hydrolase pyvD (245 aa).

Active-site residues include Cys133, Asp179, and His211.

The protein belongs to the dienelactone hydrolase family.

It functions in the pathway secondary metabolite biosynthesis. In terms of biological role, hydrolase; part of the gene cluster that mediates the biosynthesis of pyranoviolin A, a pyranonigrin analog with a C-3 methoxy group. Initially, the PKS portion of pyvA synthesizes C-10 carbon chain from 5 molecules of malonyl-CoA, which is then condensed with the thiolation (T) domain-bound glycine activated by the adenylation (A) domain. The subsequent chain release by Dieckmann condensation (DKC) could be catalyzed by the TE domain present at the C-terminus of pyvA and/or the alpha/beta hydrolase pyvD, installing the tetramic acid moiety. The FAD-dependent monooxygenase pyvC next epoxidizes one of the olefins of the polyketide part, and the epoxide ring-opening induces the dihydro-gamma-pyrone ring formation. The cytochrome P450 monooxygeanse pyvB would be responsible for the 2 consecutive reactions, in which the dihydro-gamma-pyrone is oxidized to gamma-pyrone and C-7 is hydroxylated to yield pyranonigrin F. Finally, the O-methyltransferase pyvH methylates the C-3 hydroxy group to complete the biosynthesis. The polypeptide is Hydrolase pyvD (Aspergillus violaceofuscus (strain CBS 115571)).